A 371-amino-acid polypeptide reads, in one-letter code: Aspartate-semialdehyde dehydrogenase (371 aa).

NADP(+) is bound by residues 10-13 (RGMV), 37-38 (TS), and Q74. R103 provides a ligand contact to phosphate. C136 serves as the catalytic Acyl-thioester intermediate. Substrate is bound at residue Q163. An NADP(+)-binding site is contributed by S166. E243 is a binding site for substrate. K246 is a phosphate binding site. Residue R270 coordinates substrate. H277 serves as the catalytic Proton acceptor. Q353 lines the NADP(+) pocket.

This sequence belongs to the aspartate-semialdehyde dehydrogenase family. In terms of assembly, homodimer.

It catalyses the reaction L-aspartate 4-semialdehyde + phosphate + NADP(+) = 4-phospho-L-aspartate + NADPH + H(+). It participates in amino-acid biosynthesis; L-lysine biosynthesis via DAP pathway; (S)-tetrahydrodipicolinate from L-aspartate: step 2/4. The protein operates within amino-acid biosynthesis; L-methionine biosynthesis via de novo pathway; L-homoserine from L-aspartate: step 2/3. Its pathway is amino-acid biosynthesis; L-threonine biosynthesis; L-threonine from L-aspartate: step 2/5. In terms of biological role, catalyzes the NADPH-dependent formation of L-aspartate-semialdehyde (L-ASA) by the reductive dephosphorylation of L-aspartyl-4-phosphate. This Haemophilus influenzae (strain ATCC 51907 / DSM 11121 / KW20 / Rd) protein is Aspartate-semialdehyde dehydrogenase.